A 116-amino-acid polypeptide reads, in one-letter code: NADH-ubiquinone oxidoreductase chain 3 (116 aa).

3 helical membrane-spanning segments follow: residues 3-23, 56-76, and 85-105; these read LILA…MIAF, FFLV…LLPL, and PTLA…GLIH.

It belongs to the complex I subunit 3 family.

The protein localises to the mitochondrion membrane. It carries out the reaction a ubiquinone + NADH + 5 H(+)(in) = a ubiquinol + NAD(+) + 4 H(+)(out). Core subunit of the mitochondrial membrane respiratory chain NADH dehydrogenase (Complex I) that is believed to belong to the minimal assembly required for catalysis. Complex I functions in the transfer of electrons from NADH to the respiratory chain. The immediate electron acceptor for the enzyme is believed to be ubiquinone. This chain is NADH-ubiquinone oxidoreductase chain 3 (MT-ND3), found in Latimeria chalumnae (Coelacanth).